Here is a 461-residue protein sequence, read N- to C-terminus: Cysteine--tRNA ligase (461 aa).

Residue Cys-29 participates in Zn(2+) binding. The 'HIGH' region motif lies at 31–41; sequence MTVYDLCHLGH. The Zn(2+) site is built by Cys-213, His-238, and Glu-242. The 'KMSKS' region motif lies at 270–274; that stretch reads KMSKS. Lys-273 contributes to the ATP binding site.

It belongs to the class-I aminoacyl-tRNA synthetase family. Monomer. Zn(2+) serves as cofactor.

It localises to the cytoplasm. It carries out the reaction tRNA(Cys) + L-cysteine + ATP = L-cysteinyl-tRNA(Cys) + AMP + diphosphate. The sequence is that of Cysteine--tRNA ligase from Delftia acidovorans (strain DSM 14801 / SPH-1).